The sequence spans 434 residues: MSKITKIIAREIIDSRGNPTVESEVHLEGGFVGLASSPSGASTGSLEALELRDENKDRFMGKGVEKAVSLINEKISIALKNKNARNQSDIDHIMIDLDGTINKSKLGANAILSVSLAVAKAAAASKRMPLYAHIAEINETPGVFSMPLPMINIINGGKHANNNIDIQEFMIQPISAKTVKESIRIGCEIFHALGELLKEKGMSTTVGDEGGYAPNLKSNEEALNIIQDAIQKTKYKLGQDIRLAIDCAASELYNKNEKKYNLKGENISFSSKEFTHYLEKLSQKYPIVSIEDGQDESDWEGFLYQTHVLGNKIQLVGDDLFVTNKNILKKGIKKGIANSILIKLNQIGTLTETLEAIKTAKQANYGVIISHRSGETEDASIADLSVGTSSGQIKTGSMSRSDRTSKYNQLIRIEENLGTKYAPFHGLREIKSAF.

Residue Gln-167 coordinates (2R)-2-phosphoglycerate. Glu-209 serves as the catalytic Proton donor. Residues Asp-246, Glu-291, and Asp-318 each contribute to the Mg(2+) site. Residues Lys-343, Arg-372, Ser-373, and Lys-394 each contribute to the (2R)-2-phosphoglycerate site. Residue Lys-343 is the Proton acceptor of the active site.

Belongs to the enolase family. In terms of assembly, component of the RNA degradosome, a multiprotein complex involved in RNA processing and mRNA degradation. Mg(2+) is required as a cofactor.

The protein resides in the cytoplasm. It is found in the secreted. The protein localises to the cell surface. The catalysed reaction is (2R)-2-phosphoglycerate = phosphoenolpyruvate + H2O. It functions in the pathway carbohydrate degradation; glycolysis; pyruvate from D-glyceraldehyde 3-phosphate: step 4/5. Functionally, catalyzes the reversible conversion of 2-phosphoglycerate (2-PG) into phosphoenolpyruvate (PEP). It is essential for the degradation of carbohydrates via glycolysis. This is Enolase from Buchnera aphidicola subsp. Acyrthosiphon pisum (strain APS) (Acyrthosiphon pisum symbiotic bacterium).